Reading from the N-terminus, the 80-residue chain is Large ribosomal subunit protein bL31B (80 aa).

The protein belongs to the bacterial ribosomal protein bL31 family. Type B subfamily. Part of the 50S ribosomal subunit.

This Xylella fastidiosa (strain M23) protein is Large ribosomal subunit protein bL31B.